Here is a 582-residue protein sequence, read N- to C-terminus: ABC transporter-like protein ECU11_1340 (582 aa).

The ABC transporter domain occupies 15 to 257; that stretch reads VPNQNLSSNE…LGTKGIHNDG (243 aa). ATP is bound at residue 47-54; sequence GTSGSGKT. The 204-residue stretch at 316-519 folds into the ABC transmembrane type-2 domain; sequence YVSFQMAIRQ…EIDAFISNFF (204 aa). Transmembrane regions (helical) follow at residues 335 to 355, 359 to 378, 412 to 432, 436 to 456, 482 to 502, and 551 to 571; these read ILYSLAMPIAMALFLVTGKYI, FSIATIKASMLSLSLYYVMN, TLVSILKYCIFFGIIYAFGLI, HAFLGQVLMYTLGGTVSSMLF, GALLGAGALLGALTLWISVIP, and SFLRILFLMFHPFAFFHSSIL.

It belongs to the ABC transporter superfamily.

The protein localises to the membrane. In Encephalitozoon cuniculi (strain GB-M1) (Microsporidian parasite), this protein is ABC transporter-like protein ECU11_1340.